The following is a 445-amino-acid chain: Crotonyl-CoA reductase (445 aa).

E149 is a binding site for Zn(2+).

This sequence belongs to the zinc-containing alcohol dehydrogenase family. Crotonyl-CoA carboxylase/reductase subfamily. Homodimer. Zn(2+) serves as cofactor.

It catalyses the reaction butanoyl-CoA + NADP(+) = (2E)-butenoyl-CoA + NADPH + H(+). With respect to regulation, inhibited by NADPH at concentrations above 200 uM, by MgCl (30%), by ZnCl(2) (55%), and by CoCl, MnCl and CaCl (100%). Also inhibited by iodoacetamide, N-ethylmaleamide, the thiol group inhibitor beta-chloromercuribenzoate, palmitoyl-CoA and myristoyl-CoA. Its function is as follows. Catalyzes the conversion of crotonyl-CoA to butyryl-CoA. It uses only NADP as electron donor. May have a role in providing butyryl-CoA as a starter unit for straight-chain fatty acid biosynthesis. The protein is Crotonyl-CoA reductase (ccrA2) of Streptomyces avermitilis (strain ATCC 31267 / DSM 46492 / JCM 5070 / NBRC 14893 / NCIMB 12804 / NRRL 8165 / MA-4680).